The primary structure comprises 1075 residues: Atos homolog protein A (1075 aa).

A transactivation domain 1 (TAD1) region spans residues 24-32; it reads ALLITEGRT. 3 disordered regions span residues 430-469, 570-592, and 703-766; these read FGSP…RQPA, YSPQ…PDSI, and LNKN…PHSV. Positions 440-454 are enriched in basic and acidic residues; it reads DSREGKVREKSETRP. Polar residues predominate over residues 703–712; that stretch reads LNKNKTNCSS. Basic and acidic residues predominate over residues 746-759; sequence DRLKTEQEAKRDSG. Positions 878–935 are required for macropage invasion; it reads LLGNFEESVLNYRLDPLGIVDGFTAEVGASGTFCPTHLTLPVEVSFYSVSDDNAPSPY. A transactivation domain 2 (TAD2) region spans residues 962–970; sequence FNPNKTVVK.

It belongs to the ATOS family.

The protein localises to the nucleus. In terms of biological role, transcription regulator that syncronizes transcriptional and translational programs to promote macrophage invasion of tissues. The polypeptide is Atos homolog protein A (Atosa) (Mus musculus (Mouse)).